Here is a 358-residue protein sequence, read N- to C-terminus: S-adenosylmethionine:tRNA ribosyltransferase-isomerase (358 aa).

This sequence belongs to the QueA family. Monomer.

It localises to the cytoplasm. It carries out the reaction 7-aminomethyl-7-carbaguanosine(34) in tRNA + S-adenosyl-L-methionine = epoxyqueuosine(34) in tRNA + adenine + L-methionine + 2 H(+). Its pathway is tRNA modification; tRNA-queuosine biosynthesis. In terms of biological role, transfers and isomerizes the ribose moiety from AdoMet to the 7-aminomethyl group of 7-deazaguanine (preQ1-tRNA) to give epoxyqueuosine (oQ-tRNA). This Desulfotalea psychrophila (strain LSv54 / DSM 12343) protein is S-adenosylmethionine:tRNA ribosyltransferase-isomerase.